The following is a 1031-amino-acid chain: Sister chromatid cohesion 1 protein 4 (1031 aa).

Residues 461–481 (TPDKEDPGTCNDDAGNNNITG) form a disordered region. The Nuclear localization signal motif lies at 545-552 (TKRLRSAP). Disordered regions lie at residues 661-703 (VEEN…EELK), 742-772 (EKLDRVEDLQVEESHENHDGEGGQDVCADPN), and 803-835 (ELPHEDEKTDASAEVSELGRDDQTPCDNTVGST). Basic and acidic residues-rich tracts occupy residues 742–762 (EKLDRVEDLQVEESHENHDGE) and 803–825 (ELPHEDEKTDASAEVSELGRDDQ).

Belongs to the rad21 family. In terms of assembly, component of the cohesin complex. As to expression, expressed in tissues containing dividing cells such as seedlings, flower buds, flowers and inflorescence meristem tissue.

Its subcellular location is the nucleus. It is found in the chromosome. It localises to the centromere. Its function is as follows. Involved in sister chromatid and centromere cohesion during mitosis. This Arabidopsis thaliana (Mouse-ear cress) protein is Sister chromatid cohesion 1 protein 4 (SYN4).